The sequence spans 398 residues: S-adenosylmethionine synthase (398 aa).

Residue H15 coordinates ATP. D17 is a Mg(2+) binding site. E43 is a K(+) binding site. L-methionine contacts are provided by E56 and Q99. Residues Q99 to T109 form a flexible loop region. ATP is bound by residues D175 to K177, R243 to F244, D252, R258 to K259, A275, and K279. L-methionine is bound at residue D252. K283 serves as a coordination point for L-methionine.

It belongs to the AdoMet synthase family. Homotetramer; dimer of dimers. Mg(2+) serves as cofactor. K(+) is required as a cofactor.

The protein localises to the cytoplasm. The enzyme catalyses L-methionine + ATP + H2O = S-adenosyl-L-methionine + phosphate + diphosphate. The protein operates within amino-acid biosynthesis; S-adenosyl-L-methionine biosynthesis; S-adenosyl-L-methionine from L-methionine: step 1/1. Its function is as follows. Catalyzes the formation of S-adenosylmethionine (AdoMet) from methionine and ATP. The overall synthetic reaction is composed of two sequential steps, AdoMet formation and the subsequent tripolyphosphate hydrolysis which occurs prior to release of AdoMet from the enzyme. The sequence is that of S-adenosylmethionine synthase from Parafrankia sp. (strain EAN1pec).